A 136-amino-acid polypeptide reads, in one-letter code: Small ribosomal subunit protein uS11c (136 aa).

The protein belongs to the universal ribosomal protein uS11 family. As to quaternary structure, part of the 30S ribosomal subunit.

The protein localises to the plastid. This is Small ribosomal subunit protein uS11c from Epifagus virginiana (Beechdrops).